A 147-amino-acid chain; its full sequence is Hemoglobin subunit beta (147 aa).

Val-2 is subject to N-acetylvaline. One can recognise a Globin domain in the interval 3–147; that stretch reads HLTGEEKSAV…VANALAHKYH (145 aa). Thr-13 carries the post-translational modification Phosphothreonine. Ser-45 carries the phosphoserine modification. Lys-60 is subject to N6-acetyllysine. His-64 serves as a coordination point for heme b. Lys-83 carries the N6-acetyllysine modification. His-93 serves as a coordination point for heme b. Cys-94 is modified (S-nitrosocysteine). An N6-acetyllysine modification is found at Lys-145.

It belongs to the globin family. As to quaternary structure, heterotetramer of two alpha chains and two beta chains. Red blood cells.

In terms of biological role, involved in oxygen transport from the lung to the various peripheral tissues. The protein is Hemoglobin subunit beta (HBB) of Ateles paniscus (Black spider monkey).